The sequence spans 159 residues: MIDSDGFRPNVGIILTNDVGQVLWARRINQDAWQFPQGGINARETPEEALFRELNEEVGLEEQDVKILACTRGWLRYRLPQRLVRTHSQPLCIGQKQKWFLLRLTGAEDRVRMDLTGKPEFDGWRWVSYWYPLGQVVTFKREVYRRALKELAPRLPVRD.

The region spanning 6–149 is the Nudix hydrolase domain; it reads GFRPNVGIIL…KREVYRRALK (144 aa). The Nudix box signature appears at 38–59; the sequence is GGINARETPEEALFRELNEEVG.

Belongs to the Nudix hydrolase family. RppH subfamily. A divalent metal cation serves as cofactor.

In terms of biological role, accelerates the degradation of transcripts by removing pyrophosphate from the 5'-end of triphosphorylated RNA, leading to a more labile monophosphorylated state that can stimulate subsequent ribonuclease cleavage. The polypeptide is RNA pyrophosphohydrolase (Stutzerimonas stutzeri (strain A1501) (Pseudomonas stutzeri)).